Here is a 61-residue protein sequence, read N- to C-terminus: Small ribosomal subunit protein uS14 (61 aa).

Cys24, Cys27, Cys40, and Cys43 together coordinate Zn(2+).

It belongs to the universal ribosomal protein uS14 family. Zinc-binding uS14 subfamily. In terms of assembly, part of the 30S ribosomal subunit. Contacts proteins S3 and S10. Zn(2+) serves as cofactor.

Its function is as follows. Binds 16S rRNA, required for the assembly of 30S particles and may also be responsible for determining the conformation of the 16S rRNA at the A site. The sequence is that of Small ribosomal subunit protein uS14 from Desulfotalea psychrophila (strain LSv54 / DSM 12343).